A 367-amino-acid chain; its full sequence is Chorismate synthase (367 aa).

The tract at residues 41-60 (FTHDLQRRASGKSRHTSARR) is disordered. Residues Arg48 and Arg54 each coordinate NADP(+). Residues 125 to 127 (RSS), 238 to 239 (NA), Gly278, 293 to 297 (KPTSS), and Arg319 each bind FMN.

It belongs to the chorismate synthase family. In terms of assembly, homotetramer. FMNH2 serves as cofactor.

The catalysed reaction is 5-O-(1-carboxyvinyl)-3-phosphoshikimate = chorismate + phosphate. Its pathway is metabolic intermediate biosynthesis; chorismate biosynthesis; chorismate from D-erythrose 4-phosphate and phosphoenolpyruvate: step 7/7. In terms of biological role, catalyzes the anti-1,4-elimination of the C-3 phosphate and the C-6 proR hydrogen from 5-enolpyruvylshikimate-3-phosphate (EPSP) to yield chorismate, which is the branch point compound that serves as the starting substrate for the three terminal pathways of aromatic amino acid biosynthesis. This reaction introduces a second double bond into the aromatic ring system. This chain is Chorismate synthase, found in Xanthomonas euvesicatoria pv. vesicatoria (strain 85-10) (Xanthomonas campestris pv. vesicatoria).